Reading from the N-terminus, the 193-residue chain is MAKKQSILSPIIRITFTFLVLCGLVYPLIVTGIAQAVMKDNADGSLIYNDKDEVVGSKLIGQNFTDPRYFHGRVSSIEYKAEASGSNNYAPSNPDLAKRVEKSIDDWKKQNRAIPVTEVPIDLVTNSGSGLDPDISPKAASVQVDRISKLTNIPKEKLDQLIKDQTEGAALGLFGEDRVNVLKLNLELQKLMK.

The chain crosses the membrane as a helical span at residues 14–34; that stretch reads ITFTFLVLCGLVYPLIVTGIA.

Belongs to the KdpC family. The system is composed of three essential subunits: KdpA, KdpB and KdpC.

The protein resides in the cell membrane. In terms of biological role, part of the high-affinity ATP-driven potassium transport (or Kdp) system, which catalyzes the hydrolysis of ATP coupled with the electrogenic transport of potassium into the cytoplasm. This subunit acts as a catalytic chaperone that increases the ATP-binding affinity of the ATP-hydrolyzing subunit KdpB by the formation of a transient KdpB/KdpC/ATP ternary complex. This chain is Potassium-transporting ATPase KdpC subunit, found in Bacillus mycoides (strain KBAB4) (Bacillus weihenstephanensis).